We begin with the raw amino-acid sequence, 194 residues long: MSEIKLIVGLGNPGDKYADTRHNAGEWLINRLARQFHFSLTPESKFSGKTARTVINGNEIRFLVPTTFMNLSGKAISSLANFYRIKPEEILVIHDELDLPPGVAKIKQGGGHGGHNGLRDTIAQLGNNKNFYRLRVGIGHPGDKNLVSAYVLNKPSLTDWQLIDKALDEATSCVDILIKDGITKATNRLNAFKA.

Y17 is a binding site for tRNA. H22 serves as the catalytic Proton acceptor. TRNA contacts are provided by F68, N70, and N116.

It belongs to the PTH family. Monomer.

It localises to the cytoplasm. It carries out the reaction an N-acyl-L-alpha-aminoacyl-tRNA + H2O = an N-acyl-L-amino acid + a tRNA + H(+). Its function is as follows. Hydrolyzes ribosome-free peptidyl-tRNAs (with 1 or more amino acids incorporated), which drop off the ribosome during protein synthesis, or as a result of ribosome stalling. In terms of biological role, catalyzes the release of premature peptidyl moieties from peptidyl-tRNA molecules trapped in stalled 50S ribosomal subunits, and thus maintains levels of free tRNAs and 50S ribosomes. The protein is Peptidyl-tRNA hydrolase of Pasteurella multocida (strain Pm70).